A 212-amino-acid polypeptide reads, in one-letter code: Thymidylate kinase (212 aa).

10 to 17 lines the ATP pocket; that stretch reads GPEGAGKT.

It belongs to the thymidylate kinase family.

The catalysed reaction is dTMP + ATP = dTDP + ADP. In terms of biological role, phosphorylation of dTMP to form dTDP in both de novo and salvage pathways of dTTP synthesis. The chain is Thymidylate kinase from Bacillus velezensis (strain DSM 23117 / BGSC 10A6 / LMG 26770 / FZB42) (Bacillus amyloliquefaciens subsp. plantarum).